The following is a 994-amino-acid chain: Translocase of chloroplast 108, chloroplastic (994 aa).

Disordered regions lie at residues 14-61, 84-124, and 152-287; these read KEAS…EDEP, TTDL…DPSV, and AVDG…DETR. Composition is skewed to polar residues over residues 37-53 and 84-98; these read GETT…ANES and TTDL…TPSN. The span at 99 to 121 shows a compositional bias: basic and acidic residues; the sequence is AEKESPEATEVRIVEEGKLEKAD. Residues 166 to 197 are compositionally biased toward acidic residues; sequence NDGDTDANTADEDNENDEDDVDEDEDEDDADM. Residues 249 to 268 are compositionally biased toward polar residues; it reads ASDSPGRNTQRPNGALSTQI. Residues 269–280 show a composition bias toward low complexity; sequence TSTTDESASSDA. Positions 360–589 constitute an AIG1-type G domain; sequence DFACTILVLG…KLQETTAPGR (230 aa). The segment at 369–376 is G1; that stretch reads GKTGVGKS. 372-377 lines the GTP pocket; the sequence is GVGKSS. Position 376 (S376) interacts with Mg(2+). The interval 395 to 399 is G2; sequence PSTNK. The G3 stretch occupies residues 416-419; that stretch reads DTPG. Residues 488 to 491 are G4; sequence THAS. Residues H489 and 537–538 contribute to the GTP site; that span reads EN. The G5 stretch occupies residues 537-539; that stretch reads ENH. Disordered stretches follow at residues 616 to 659 and 691 to 716; these read LPDE…EDLT and EAKK…EAGN. Acidic residues predominate over residues 620–643; that stretch reads QAGESDESDDDEEEEDSDADDYDE. Positions 650-659 are enriched in basic and acidic residues; sequence LSKEELEDLT. Positions 705–714 are enriched in acidic residues; sequence AEAEEAEDEA. Residues 969 to 989 form a helical membrane-spanning segment; sequence MVLIGIVPILRSLINCRFGFG.

It belongs to the TRAFAC class TrmE-Era-EngA-EngB-Septin-like GTPase superfamily. AIG1/Toc34/Toc159-like paraseptin GTPase family. TOC159 subfamily. As to quaternary structure, part of the TOC core complex. The cofactor is Mg(2+).

The protein resides in the plastid. Its subcellular location is the chloroplast outer membrane. Functionally, GTPase involved in protein precursor import into chloroplasts. Seems to recognize chloroplast-destined precursor proteins and regulate their presentation to the translocation channel through GTP hydrolysis. Probably specialized in the import of nuclear encoded non-photosynthetic preproteins from the cytoplasm to the chloroplast. This Physcomitrium patens (Spreading-leaved earth moss) protein is Translocase of chloroplast 108, chloroplastic.